The primary structure comprises 204 residues: Large ribosomal subunit protein eL15 (204 aa).

It belongs to the eukaryotic ribosomal protein eL15 family. Component of the large ribosomal subunit.

It is found in the cytoplasm. Its function is as follows. Component of the large ribosomal subunit. The ribosome is a large ribonucleoprotein complex responsible for the synthesis of proteins in the cell. The protein is Large ribosomal subunit protein eL15 (rpl15) of Silurus asotus (Amur catfish).